The primary structure comprises 359 residues: Large ribosomal subunit protein uL3 (359 aa).

The segment at 336-359 (VRPPAKRPPAEAPQITYISRESKQ) is disordered.

It belongs to the universal ribosomal protein uL3 family. In terms of assembly, part of the 50S ribosomal subunit. Forms a cluster with proteins L14 and L24e.

Its function is as follows. One of the primary rRNA binding proteins, it binds directly near the 3'-end of the 23S rRNA, where it nucleates assembly of the 50S subunit. This chain is Large ribosomal subunit protein uL3, found in Thermococcus sibiricus (strain DSM 12597 / MM 739).